The chain runs to 100 residues: NADH-quinone oxidoreductase subunit K (100 aa).

3 consecutive transmembrane segments (helical) span residues 2–22, 28–48, and 63–83; these read ISLN…LFGI, ILML…GFVA, and LFII…VVIW.

Belongs to the complex I subunit 4L family. As to quaternary structure, NDH-1 is composed of 14 different subunits. Subunits NuoA, H, J, K, L, M, N constitute the membrane sector of the complex.

It is found in the cell inner membrane. The enzyme catalyses a quinone + NADH + 5 H(+)(in) = a quinol + NAD(+) + 4 H(+)(out). In terms of biological role, NDH-1 shuttles electrons from NADH, via FMN and iron-sulfur (Fe-S) centers, to quinones in the respiratory chain. The immediate electron acceptor for the enzyme in this species is believed to be ubiquinone. Couples the redox reaction to proton translocation (for every two electrons transferred, four hydrogen ions are translocated across the cytoplasmic membrane), and thus conserves the redox energy in a proton gradient. This Helicobacter hepaticus (strain ATCC 51449 / 3B1) protein is NADH-quinone oxidoreductase subunit K.